We begin with the raw amino-acid sequence, 1125 residues long: tRNA (34-2'-O)-methyltransferase regulator WDR6 (1125 aa).

The residue at position 1 (Met-1) is an N-acetylmethionine. WD repeat units follow at residues 89–130 (SKGL…GNVA), 155–197 (TDRC…PDNK), 207–246 (GHVG…VPGG), 256–294 (GHSA…QAFR), 295–335 (GHQG…YPGL), 346–384 (SRPG…WEQL), 433–475 (LFQG…TGKA), 489–528 (SKQR…FKKP), 567–605 (HGKQ…QPVL), 611–650 (RGMN…KLHI), 652–692 (NCGG…IRPN), 725–765 (EHPD…GAAH), 767–798 (LTAV…HPGL), 860–905 (TRYM…RILH), 912–958 (HHKR…DRGS), 982–1024 (AHSC…PELE), and 1047–1085 (AHAA…PTFM).

It belongs to the WD repeat WDR6 family. As to quaternary structure, interacts with FTSJ1; the interaction is direct, and required for 2'-O-methylation of position 34 in substrate tRNAs. Interacts with IRS4. Interacts with STK11/LKB1. As to expression, expressed in hypothalamus, hippocampus, cerebrum cortex and cerebellum.

It is found in the cytoplasm. In terms of biological role, together with methyltransferase FTSJ1, methylates the 2'-O-ribose of nucleotides at position 34 of the tRNA anticodon loop of substrate tRNAs. Required for the correct positioning of the substrate tRNA for methylation. Required to suppress amino acid starvation-induced autophagy. Enhances the STK11/LKB1-induced cell growth suppression activity. This chain is tRNA (34-2'-O)-methyltransferase regulator WDR6 (Wdr6), found in Rattus norvegicus (Rat).